The sequence spans 206 residues: uncharacterized protein (206 aa).

The N-terminal stretch at 1–18 (MSSLVLIPCALLTQGIYA) is a signal peptide.

This is an uncharacterized protein from Acanthamoeba polyphaga mimivirus (APMV).